The chain runs to 1141 residues: Envelopment polyprotein (1141 aa).

A signal peptide spans 1–18 (MGRLYLIVLGVLITATAG). The Lumenal portion of the chain corresponds to 19 to 483 (FPRSVHELKI…HSLAVELCVP (465 aa)). Cystine bridges form between Cys30–Cys158, Cys64–Cys164, Cys113–Cys135, Cys140–Cys145, Cys182–Cys192, Cys217–Cys253, Cys242–Cys357, Cys382–Cys441, Cys386–Cys395, and Cys458–Cys481. Asn141 is a glycosylation site (N-linked (GlcNAc...) asparagine; by host). Asn353 carries an N-linked (GlcNAc...) asparagine; by host glycan. N-linked (GlcNAc...) asparagine; by host glycosylation is present at Asn405. Residues 484–506 (GIHGWATIALVITFCFGWLLIPT) traverse the membrane as a helical segment. Residues 507–633 (TTMVVLKCLR…LGVFRYKSRC (127 aa)) lie on the Cytoplasmic side of the membrane. The binding to the ribonucleoprotein stretch occupies residues 522–539 (CSHYSTESKFKVILEKVK). 2 CCHC-type zinc fingers span residues 551–571 (CDICHHECETAKELESHKKSC) and 576–597 (CPYCMTITEATESALQAHYAVC). Binding to the ribonucleoprotein regions lie at residues 594 to 611 (YAVCKLTGRFHEALKKSL), 598 to 609 (KLTGRFHEALKK), and 617 to 631 (QRGCYRTLGVFRYKS). Residues 617–640 (QRGCYRTLGVFRYKSRCYVGLVWM) enclose the ITAM domain. Residues Tyr621 and Tyr634 each carry the phosphotyrosine modification. The short motif at 621–624 (YRTL) is the YxxL element. A helical membrane pass occupies residues 634 to 654 (YVGLVWMCLLTLELIVWAASA). The Lumenal portion of the chain corresponds to 655–1110 (DTPLLEPGWS…EWLLGILNGN (456 aa)). 8 disulfide bridges follow: Cys741–Cys776, Cys745–Cys783, Cys757–Cys890, Cys771–Cys901, Cys786–Cys909, Cys812–Cys821, Cys829–Cys838, and Cys869–Cys873. The fusion loop stretch occupies residues 763–783 (YQYETSWSCNPPDCPGVGTGC). Asn933 carries an N-linked (GlcNAc...) asparagine; by host glycan. 5 disulfide bridges follow: Cys975–Cys1005, Cys998–Cys1050, Cys1015–Cys1020, Cys1051–Cys1056, and Cys1090–Cys1094. A helical transmembrane segment spans residues 1111 to 1131 (WVVVAVLVIILLISIFLFSFF). A binding to the ribonucleoprotein region spans residues 1127 to 1141 (LFSFFCPIRSHKKQL). At 1132–1141 (CPIRSHKKQL) the chain is on the cytoplasmic side.

Belongs to the hantavirus envelope glycoprotein family. In terms of assembly, homodimer. Homotetramer; forms heterotetrameric Gn-Gc spikes in the pre-fusion conformation. Interacts (via C-terminus) with the nucleoprotein. Interacts with host TUFM; this interaction contributes to the virus-induced degradation of mitochondria by autophagy, which leads to degradation of host MAVS and inhibition of type I interferon (IFN) responses. Interacts with host MAP1LC3B; this interaction contributes to the virus-induced degradation of mitochondria by autophagy, which leads to degradation of host MAVS and inhibition of type I interferon (IFN) responses. As to quaternary structure, homodimer. Homotetramer; forms heterotetrameric Gn-Gc spikes in the pre-fusion conformation. Homotrimer; forms homotrimer in the post-fusion conformation at acidic pH. Interacts (via C-terminus) with the nucleoprotein. Post-translationally, envelope polyprotein precursor is quickly cleaved in vivo just after synthesis, presumably by host signal peptidase.

The protein localises to the virion membrane. It is found in the host cell surface. Its subcellular location is the host Golgi apparatus membrane. It localises to the host endoplasmic reticulum membrane. The protein resides in the host mitochondrion. Functionally, forms homotetramers with glycoprotein C at the surface of the virion. Attaches the virion to host cell receptors including integrin ITGAV/ITGB3. This attachment induces virion internalization predominantly through clathrin-dependent endocytosis. Mediates the assembly and budding of infectious virus particles through its interaction with the nucleocapsid protein and the viral genome. May dysregulate normal immune and endothelial cell responses through an ITAM motif. Translocates to mitochondria, binds to host TUFM and recruits MAP1LC3B. These interactions induce mitochondrial autophagy and therefore destruction of host MAVS leading to inhibition of type I interferon (IFN) responses. Concomitant breakdown of glycoprotein N is apparently prevented by the nucleoprotein that may inhibit Gn-stimulated autophagosome-lysosome fusion. Interacts with the viral genomic RNA. Forms homotetramers with glycoprotein N at the surface of the virion. Attaches the virion to host cell receptors including integrin ITGAV/ITGB3. This attachment induces virion internalization predominantly through clathrin-dependent endocytosis. Class II fusion protein that promotes fusion of viral membrane with host endosomal membrane after endocytosis of the virion. The protein is Envelopment polyprotein (GP) of Homo sapiens (Human).